The sequence spans 406 residues: Pyruvate dehydrogenase E1 component subunit beta-3, chloroplastic (406 aa).

The N-terminal 70 residues, M1 to K70, are a transit peptide targeting the chloroplast. Residue E142 coordinates thiamine diphosphate. Residues V195, A243, I244, and N248 each coordinate K(+).

In terms of assembly, tetramer of 2 alpha and 2 beta subunits. Thiamine diphosphate serves as cofactor.

The protein resides in the plastid. It localises to the chloroplast. The catalysed reaction is N(6)-[(R)-lipoyl]-L-lysyl-[protein] + pyruvate + H(+) = N(6)-[(R)-S(8)-acetyldihydrolipoyl]-L-lysyl-[protein] + CO2. Its function is as follows. The pyruvate dehydrogenase complex catalyzes the overall conversion of pyruvate to acetyl-CoA and CO(2). It contains multiple copies of three enzymatic components: pyruvate dehydrogenase (E1), dihydrolipoamide acetyltransferase (E2) and lipoamide dehydrogenase (E3). In Arabidopsis thaliana (Mouse-ear cress), this protein is Pyruvate dehydrogenase E1 component subunit beta-3, chloroplastic (E1-BETA-2).